We begin with the raw amino-acid sequence, 349 residues long: Methylglutaconyl-CoA hydratase 1, mitochondrial (349 aa).

The N-terminal 37 residues, M1–Y37, are a transit peptide targeting the mitochondrion.

Belongs to the enoyl-CoA hydratase/isomerase family. As to quaternary structure, homohexamer.

The protein resides in the mitochondrion. It carries out the reaction (3S)-3-hydroxy-3-methylglutaryl-CoA = 3-methyl-(2E)-glutaconyl-CoA + H2O. The protein operates within amino-acid degradation; L-leucine degradation; (S)-3-hydroxy-3-methylglutaryl-CoA from 3-isovaleryl-CoA: step 3/3. Its function is as follows. 3-methylglutaconyl-CoA hydratase that catalyzes the fifth step in the leucine degradation pathway, the reversible hydration of 3-methylglutaconyl-CoA (3-MG-CoA) to 3-hydroxy-3-methylglutaryl-CoA (HMG-CoA). Involved in vegetative growth, conidiation and in the stress response. Controls mitochondrial morphology and mitophagy, which are critical for the infectious growth of the pathogen. This chain is Methylglutaconyl-CoA hydratase 1, mitochondrial, found in Pyricularia oryzae (strain 70-15 / ATCC MYA-4617 / FGSC 8958) (Rice blast fungus).